A 225-amino-acid polypeptide reads, in one-letter code: ATP-dependent dethiobiotin synthetase BioD 1 (225 aa).

13–18 (EVGKTV) contacts ATP. T17 provides a ligand contact to Mg(2+). The active site involves K38. Position 42 (S42) interacts with substrate. Residues D55, 116-119 (EGAG), 176-177 (ND), 205-207 (PWL), and E212 contribute to the ATP site. Residues D55 and E116 each contribute to the Mg(2+) site.

This sequence belongs to the dethiobiotin synthetase family. Homodimer. Mg(2+) is required as a cofactor.

It localises to the cytoplasm. The catalysed reaction is (7R,8S)-7,8-diammoniononanoate + CO2 + ATP = (4R,5S)-dethiobiotin + ADP + phosphate + 3 H(+). Its pathway is cofactor biosynthesis; biotin biosynthesis; biotin from 7,8-diaminononanoate: step 1/2. Its function is as follows. Catalyzes a mechanistically unusual reaction, the ATP-dependent insertion of CO2 between the N7 and N8 nitrogen atoms of 7,8-diaminopelargonic acid (DAPA, also called 7,8-diammoniononanoate) to form a ureido ring. This is ATP-dependent dethiobiotin synthetase BioD 1 from Escherichia coli O157:H7.